The sequence spans 278 residues: Formamidopyrimidine-DNA glycosylase (278 aa).

Pro2 acts as the Schiff-base intermediate with DNA in catalysis. Residue Glu3 is the Proton donor of the active site. The active-site Proton donor; for beta-elimination activity is Lys59. His93, Arg112, and Arg153 together coordinate DNA. An FPG-type zinc finger spans residues 238–272 (NVYDRAGEPCPRCQSTIERIVVAQRSTYFCPTCQI). The Proton donor; for delta-elimination activity role is filled by Arg262.

Belongs to the FPG family. As to quaternary structure, monomer. Zn(2+) serves as cofactor.

It catalyses the reaction Hydrolysis of DNA containing ring-opened 7-methylguanine residues, releasing 2,6-diamino-4-hydroxy-5-(N-methyl)formamidopyrimidine.. The enzyme catalyses 2'-deoxyribonucleotide-(2'-deoxyribose 5'-phosphate)-2'-deoxyribonucleotide-DNA = a 3'-end 2'-deoxyribonucleotide-(2,3-dehydro-2,3-deoxyribose 5'-phosphate)-DNA + a 5'-end 5'-phospho-2'-deoxyribonucleoside-DNA + H(+). Its function is as follows. Involved in base excision repair of DNA damaged by oxidation or by mutagenic agents. Acts as a DNA glycosylase that recognizes and removes damaged bases. Has a preference for oxidized purines, such as 7,8-dihydro-8-oxoguanine (8-oxoG). Has AP (apurinic/apyrimidinic) lyase activity and introduces nicks in the DNA strand. Cleaves the DNA backbone by beta-delta elimination to generate a single-strand break at the site of the removed base with both 3'- and 5'-phosphates. This is Formamidopyrimidine-DNA glycosylase from Chloroflexus aurantiacus (strain ATCC 29366 / DSM 635 / J-10-fl).